A 260-amino-acid polypeptide reads, in one-letter code: Mitochondrial import inner membrane translocase subunit Tim29 (260 aa).

Residues 1–31 constitute a mitochondrion transit peptide; that stretch reads MAAAALRRFWSRRRAEAGDAVVAKPGVWARL. Residues 32–59 are Mitochondrial matrix-facing; that stretch reads GSWARALLRDYAEACRDASAEARARPGR. Residues 60 to 77 form a helical membrane-spanning segment; it reads AAVYVGLLGGAAACFTLA. Topologically, residues 78–260 are mitochondrial intermembrane; the sequence is PSEGAFEEAL…HSLVQAEAPR (183 aa).

In terms of assembly, component of the TIM22 complex, which core is composed of TIMM22, associated with TIMM10 (TIMM10A and/or TIMM10B), TIMM9, AGK and TIMM29. Interacts with TIMM10B; the interaction is direct. Interacts with TOMM40; linking the TIM22 complex to the TOM complex. Interacts with TIMM22 (when oxidized); the interaction is direct.

The protein localises to the mitochondrion inner membrane. In terms of biological role, component of the TIM22 complex, a complex that mediates the import and insertion of multi-pass transmembrane proteins into the mitochondrial inner membrane. The TIM22 complex forms a twin-pore translocase that uses the membrane potential as the external driving force. Required for the stability of the TIM22 complex and functions in the assembly of the TIMM22 protein into the TIM22 complex. May facilitate cooperation between TIM22 and TOM complexes by interacting with TOMM40. This Homo sapiens (Human) protein is Mitochondrial import inner membrane translocase subunit Tim29.